The primary structure comprises 210 residues: Large ribosomal subunit protein uL3 (210 aa).

The tract at residues G121–G150 is disordered.

This sequence belongs to the universal ribosomal protein uL3 family. In terms of assembly, part of the 50S ribosomal subunit. Forms a cluster with proteins L14 and L19.

One of the primary rRNA binding proteins, it binds directly near the 3'-end of the 23S rRNA, where it nucleates assembly of the 50S subunit. The protein is Large ribosomal subunit protein uL3 of Pelotomaculum thermopropionicum (strain DSM 13744 / JCM 10971 / SI).